The chain runs to 258 residues: Bidirectional sugar transporter SWEET7 (258 aa).

At 1–11 the chain is on the extracellular side; the sequence is MVFAHLNLLRK. Residues 12–32 traverse the membrane as a helical segment; that stretch reads IVGIIGNFIALCLFLSPTPTF. The 89-residue stretch at 12–100 folds into the MtN3/slv 1 domain; the sequence is IVGIIGNFIA…IFFVYCGRQK (89 aa). Over 33–46 the chain is Cytoplasmic; that stretch reads VRIVKKKSVEEYSP. Residues 47–67 traverse the membrane as a helical segment; it reads IPYLATLINCLVWVLYGLPTV. The Extracellular portion of the chain corresponds to 68–73; that stretch reads HPDSTL. A helical membrane pass occupies residues 74-94; that stretch reads VITINGTGILIEIVFLTIFFV. Residues 95–102 are Cytoplasmic-facing; it reads YCGRQKQR. The helical transmembrane segment at 103–123 threads the bilayer; sequence LIISAVIAAETAFIAILAVLV. At 124–134 the chain is on the extracellular side; the sequence is LTLQHTTEKRT. A helical membrane pass occupies residues 135-155; sequence MSVGIVCCVFNVMMYASPLSV. The region spanning 136-221 is the MtN3/slv 2 domain; it reads SVGIVCCVFN…LYGAYYKSTK (86 aa). The Cytoplasmic segment spans residues 156 to 166; the sequence is MKMVIKTKSVE. Residues 167–187 form a helical membrane-spanning segment; that stretch reads FMPFWLSVAGFLNAGVWTIYA. Residues 188 to 193 lie on the Extracellular side of the membrane; that stretch reads LMPFDP. The helical transmembrane segment at 194–214 threads the bilayer; that stretch reads FMAIPNGIGCLFGLAQLILYG. Residues 215–258 lie on the Cytoplasmic side of the membrane; it reads AYYKSTKRIMAERENQPGYVGLSSAIARTGSEKTANTNQEPNNV.

This sequence belongs to the SWEET sugar transporter family. Forms heterooligomers with SWEET8, SWEET11, SWEET13, SWEET16 and SWEET17.

It localises to the cell membrane. Its function is as follows. Mediates both low-affinity uptake and efflux of sugar across the plasma membrane. This Arabidopsis thaliana (Mouse-ear cress) protein is Bidirectional sugar transporter SWEET7.